The sequence spans 1326 residues: Paired amphipathic helix protein Sin3-like 4 (1326 aa).

PAH domains are found at residues 8–78, 95–165, and 292–367; these read QKLT…LPKG, KPVE…LPDT, and IPSS…LAQC. Disordered regions lie at residues 272–299, 715–812, 844–864, and 927–1000; these read DDDS…STYD, VPSR…RAET, SVAG…TEEL, and SKSK…EGDM. Residues 721–737 are compositionally biased toward basic and acidic residues; the sequence is GAEDREDAVKSTNHDRE. 4 stretches are compositionally biased toward polar residues: residues 744–757, 781–805, 844–861, and 942–961; these read SPQN…SMRS, SSKT…NLTT, SVAG…TSGT, and PRSS…SGTD. Residues 967-981 are compositionally biased toward basic and acidic residues; the sequence is DCYREDDIDHNKVES.

Its subcellular location is the nucleus. Acts as a transcriptional repressor. Plays roles in regulating gene expression and genome stability. This chain is Paired amphipathic helix protein Sin3-like 4 (SNL4), found in Arabidopsis thaliana (Mouse-ear cress).